Here is a 237-residue protein sequence, read N- to C-terminus: Ras-related protein Rab-33A (237 aa).

The GTP site is built by Asn46, Val47, Gly48, Lys49, Thr50, Cys51, Thr65, and Thr68. A Mg(2+)-binding site is contributed by Thr50. The Switch 1 signature appears at 59-71; it reads GTFPDKTEATIGV. Mg(2+) contacts are provided by Thr68 and Asp91. Residues 92–111 carry the Switch 2 motif; the sequence is TAGQERFRKSMVEHYYRNVH. Residues Gly94, Asn151, Lys152, Asp154, Ala182, and Lys183 each coordinate GTP. Residues Cys235 and Cys237 are each lipidated (S-geranylgeranyl cysteine). Cys237 is modified (cysteine methyl ester).

It belongs to the small GTPase superfamily. Rab family. Interacts with ATG16L1; the interaction is important for autophagosome formation. The cofactor is Mg(2+). In terms of tissue distribution, expressed predominantly in brain. Weak expression in ovary.

It is found in the cell membrane. It catalyses the reaction GTP + H2O = GDP + phosphate + H(+). Its activity is regulated as follows. Regulated by guanine nucleotide exchange factors (GEFs) which promote the exchange of bound GDP for free GTP. Regulated by GTPase activating proteins (GAPs) which increase the GTP hydrolysis activity. Inhibited by GDP dissociation inhibitors (GDIs). Its function is as follows. The small GTPases Rab are key regulators of intracellular membrane trafficking, from the formation of transport vesicles to their fusion with membranes. Rabs cycle between an inactive GDP-bound form and an active GTP-bound form that is able to recruit to membranes different sets of downstream effectors directly responsible for vesicle formation, movement, tethering and fusion. Modulates autophagosome formation through interaction with ATG16L1. This Mus musculus (Mouse) protein is Ras-related protein Rab-33A.